A 339-amino-acid polypeptide reads, in one-letter code: Fructose-1,6-bisphosphatase class 1 (339 aa).

Residues glutamate 91, aspartate 113, leucine 115, and aspartate 116 each contribute to the Mg(2+) site. Substrate contacts are provided by residues 116–119 (DGSS), asparagine 210, and lysine 276. Glutamate 282 contacts Mg(2+).

It belongs to the FBPase class 1 family. Homotetramer. Requires Mg(2+) as cofactor.

The protein localises to the cytoplasm. It catalyses the reaction beta-D-fructose 1,6-bisphosphate + H2O = beta-D-fructose 6-phosphate + phosphate. The protein operates within carbohydrate biosynthesis; gluconeogenesis. This Bordetella bronchiseptica (strain ATCC BAA-588 / NCTC 13252 / RB50) (Alcaligenes bronchisepticus) protein is Fructose-1,6-bisphosphatase class 1.